The following is a 50-amino-acid chain: Small ribosomal subunit protein eS31 (50 aa).

Zn(2+)-binding residues include cysteine 22, cysteine 25, cysteine 40, and cysteine 43. Residues 22–43 (CPRCGPGVFMADHGDRWACGKC) form a C4-type zinc finger.

The protein belongs to the eukaryotic ribosomal protein eS31 family. In terms of assembly, part of the 30S ribosomal subunit. The cofactor is Zn(2+).

In Pyrococcus furiosus (strain ATCC 43587 / DSM 3638 / JCM 8422 / Vc1), this protein is Small ribosomal subunit protein eS31.